The sequence spans 311 residues: Malate dehydrogenase (311 aa).

NAD(+) contacts are provided by residues 7 to 13 (GAAGGIG) and Asp-34. Substrate is bound by residues Arg-81 and Arg-87. NAD(+)-binding positions include Asn-94 and 117-119 (ITN). Residues Asn-119 and Arg-153 each contribute to the substrate site. Residue His-177 is the Proton acceptor of the active site. Met-227 lines the NAD(+) pocket.

It belongs to the LDH/MDH superfamily. MDH type 1 family. In terms of assembly, homodimer.

It carries out the reaction (S)-malate + NAD(+) = oxaloacetate + NADH + H(+). In terms of biological role, catalyzes the reversible oxidation of malate to oxaloacetate. The protein is Malate dehydrogenase of Shewanella frigidimarina (strain NCIMB 400).